The chain runs to 219 residues: Protein-L-isoaspartate O-methyltransferase (219 aa).

Residue Ser64 is part of the active site.

Belongs to the methyltransferase superfamily. L-isoaspartyl/D-aspartyl protein methyltransferase family.

Its subcellular location is the cytoplasm. It catalyses the reaction [protein]-L-isoaspartate + S-adenosyl-L-methionine = [protein]-L-isoaspartate alpha-methyl ester + S-adenosyl-L-homocysteine. Catalyzes the methyl esterification of L-isoaspartyl residues in peptides and proteins that result from spontaneous decomposition of normal L-aspartyl and L-asparaginyl residues. It plays a role in the repair and/or degradation of damaged proteins. The protein is Protein-L-isoaspartate O-methyltransferase of Chlorobaculum parvum (strain DSM 263 / NCIMB 8327) (Chlorobium vibrioforme subsp. thiosulfatophilum).